Consider the following 505-residue polypeptide: ATP synthase subunit alpha (505 aa).

An ATP-binding site is contributed by 170 to 177 (GDRQTGKT).

It belongs to the ATPase alpha/beta chains family. F-type ATPases have 2 components, CF(1) - the catalytic core - and CF(0) - the membrane proton channel. CF(1) has five subunits: alpha(3), beta(3), gamma(1), delta(1), epsilon(1). CF(0) has four main subunits: a(1), b(1), b'(1) and c(9-12).

The protein localises to the cellular thylakoid membrane. It catalyses the reaction ATP + H2O + 4 H(+)(in) = ADP + phosphate + 5 H(+)(out). Its function is as follows. Produces ATP from ADP in the presence of a proton gradient across the membrane. The alpha chain is a regulatory subunit. In Trichodesmium erythraeum (strain IMS101), this protein is ATP synthase subunit alpha.